Here is a 142-residue protein sequence, read N- to C-terminus: Large ribosomal subunit protein uL13 (142 aa).

This sequence belongs to the universal ribosomal protein uL13 family. As to quaternary structure, part of the 50S ribosomal subunit.

Functionally, this protein is one of the early assembly proteins of the 50S ribosomal subunit, although it is not seen to bind rRNA by itself. It is important during the early stages of 50S assembly. This chain is Large ribosomal subunit protein uL13, found in Herminiimonas arsenicoxydans.